We begin with the raw amino-acid sequence, 275 residues long: Large ribosomal subunit protein uL2c (275 aa).

Residues 219–255 are disordered; that stretch reads TVRGSVMNPCDHPHGGGEGRAPIGRTRPLTPWGKPAL.

This sequence belongs to the universal ribosomal protein uL2 family. Part of the 50S ribosomal subunit.

It localises to the plastid. It is found in the chloroplast. The polypeptide is Large ribosomal subunit protein uL2c (rpl2) (Trieres chinensis (Marine centric diatom)).